Here is a 138-residue protein sequence, read N- to C-terminus: Protein PsiE homolog (138 aa).

4 consecutive transmembrane segments (helical) span residues 12–34 (YLLQALLNVCLFFLALALSALLI), 56–76 (YEMLGELLIFFMYFEFIALII), 84–104 (HFPLRYFIYIGITAVIRLIII), and 109–129 (AISTFWWAMAILAMICGFFIA).

This sequence belongs to the PsiE family.

It is found in the cell membrane. The protein is Protein PsiE homolog of Bacillus subtilis (strain 168).